Consider the following 133-residue polypeptide: MNKTILIGRLTKDPELKYIPNTGTATCNFTLAVDRRFKKEGQQEADFIPIVVWGKQAESTANYMSKGKLMGVSGRIQTRSYDAKDGTRRYVTEVVAEEVKFLEWGKDSNIENVDFGVPVQEDITPVDNSDIPF.

One can recognise an SSB domain in the interval M1–E103.

In terms of assembly, homotetramer.

The sequence is that of Single-stranded DNA-binding protein 2 (ssb2) from Clostridium acetobutylicum (strain ATCC 824 / DSM 792 / JCM 1419 / IAM 19013 / LMG 5710 / NBRC 13948 / NRRL B-527 / VKM B-1787 / 2291 / W).